Reading from the N-terminus, the 64-residue chain is Long neurotoxin MS5 (64 aa).

Intrachain disulfides connect C3-C24, C6-C11, C17-C41, C45-C57, and C58-C63.

Belongs to the three-finger toxin family. Ancestral subfamily. As to expression, expressed by the venom gland.

It localises to the secreted. Functionally, produces peripheral paralysis by blocking neuromuscular transmission at the postsynaptic site. Very weak inhibitor of the endogenous nicotinic acetylcholine receptors (nAChR) in the human rhabdomyosarcoma TE 671 cell line. This neurotoxin is lethal to zebrafish by injection at the back of the dorsolateral region, but is not toxic to mice by intraperitoneal injection. In Micrurus surinamensis (Surinam coral snake), this protein is Long neurotoxin MS5.